The primary structure comprises 144 residues: Probable nucleoside diphosphate kinase 5 (144 aa).

Positions 3, 51, 79, 85, 99, and 109 each coordinate ATP. His112 acts as the Pros-phosphohistidine intermediate in catalysis.

The protein belongs to the NDK family.

The catalysed reaction is a 2'-deoxyribonucleoside 5'-diphosphate + ATP = a 2'-deoxyribonucleoside 5'-triphosphate + ADP. It catalyses the reaction a ribonucleoside 5'-diphosphate + ATP = a ribonucleoside 5'-triphosphate + ADP. Its function is as follows. Involved in the synthesis of nucleoside triphosphates other than ATP. The ATP gamma phosphate is transferred to the NDP beta phosphate via a ping-pong mechanism, using a phosphorylated active-site intermediate. The sequence is that of Probable nucleoside diphosphate kinase 5 from Arabidopsis thaliana (Mouse-ear cress).